We begin with the raw amino-acid sequence, 83 residues long: Small ribosomal subunit protein eS21 (83 aa).

It belongs to the eukaryotic ribosomal protein eS21 family. As to quaternary structure, component of the 40S small ribosomal subunit.

Its subcellular location is the cytoplasm. It is found in the cytosol. The protein resides in the rough endoplasmic reticulum. Component of the small ribosomal subunit. The ribosome is a large ribonucleoprotein complex responsible for the synthesis of proteins in the cell. The protein is Small ribosomal subunit protein eS21 (rps21) of Xenopus tropicalis (Western clawed frog).